A 261-amino-acid polypeptide reads, in one-letter code: Cytochrome c oxidase subunit 3 (261 aa).

Residues 1–15 (MTHQTHAYHMVNPSP) are Mitochondrial matrix-facing. A helical transmembrane segment spans residues 16 to 34 (WPLTGALSALLMTSGLIMW). At 35–40 (FHFNSM) the chain is on the mitochondrial intermembrane side. Residues 41–66 (TLLMLGLTTNMLTMYQWWRDIIREST) form a helical membrane-spanning segment. The Mitochondrial matrix segment spans residues 67 to 72 (FQGHHT). The helical transmembrane segment at 73-105 (SAVQKGLRYGMILFIISEVLFFTGFFWAFYHSS) threads the bilayer. At 106–128 (LAPTPELGGCWPPTGIHPLNPLE) the chain is on the mitochondrial intermembrane side. A helical transmembrane segment spans residues 129–152 (VPLLNTSVLLASGVSITWAHHSLM). At 153–155 (EGN) the chain is on the mitochondrial matrix side. The chain crosses the membrane as a helical span at residues 156–183 (RNHMLQALFITIALGVYFTLLQASEYYE). The Mitochondrial intermembrane portion of the chain corresponds to 184 to 190 (APFTISD). A helical membrane pass occupies residues 191–223 (GVYGSTFFVATGFHGLHVIIGSTFLIVCFFRQL). At 224–232 (KFHFTSTHH) the chain is on the mitochondrial matrix side. Residues 233–256 (FGFEAAAWYWHFVDVVWLFLYVSI) form a helical membrane-spanning segment. Topologically, residues 257 to 261 (YWWGS) are mitochondrial intermembrane.

The protein belongs to the cytochrome c oxidase subunit 3 family. As to quaternary structure, component of the cytochrome c oxidase (complex IV, CIV), a multisubunit enzyme composed of 14 subunits. The complex is composed of a catalytic core of 3 subunits MT-CO1, MT-CO2 and MT-CO3, encoded in the mitochondrial DNA, and 11 supernumerary subunits COX4I, COX5A, COX5B, COX6A, COX6B, COX6C, COX7A, COX7B, COX7C, COX8 and NDUFA4, which are encoded in the nuclear genome. The complex exists as a monomer or a dimer and forms supercomplexes (SCs) in the inner mitochondrial membrane with NADH-ubiquinone oxidoreductase (complex I, CI) and ubiquinol-cytochrome c oxidoreductase (cytochrome b-c1 complex, complex III, CIII), resulting in different assemblies (supercomplex SCI(1)III(2)IV(1) and megacomplex MCI(2)III(2)IV(2)).

It is found in the mitochondrion inner membrane. The enzyme catalyses 4 Fe(II)-[cytochrome c] + O2 + 8 H(+)(in) = 4 Fe(III)-[cytochrome c] + 2 H2O + 4 H(+)(out). Component of the cytochrome c oxidase, the last enzyme in the mitochondrial electron transport chain which drives oxidative phosphorylation. The respiratory chain contains 3 multisubunit complexes succinate dehydrogenase (complex II, CII), ubiquinol-cytochrome c oxidoreductase (cytochrome b-c1 complex, complex III, CIII) and cytochrome c oxidase (complex IV, CIV), that cooperate to transfer electrons derived from NADH and succinate to molecular oxygen, creating an electrochemical gradient over the inner membrane that drives transmembrane transport and the ATP synthase. Cytochrome c oxidase is the component of the respiratory chain that catalyzes the reduction of oxygen to water. Electrons originating from reduced cytochrome c in the intermembrane space (IMS) are transferred via the dinuclear copper A center (CU(A)) of subunit 2 and heme A of subunit 1 to the active site in subunit 1, a binuclear center (BNC) formed by heme A3 and copper B (CU(B)). The BNC reduces molecular oxygen to 2 water molecules using 4 electrons from cytochrome c in the IMS and 4 protons from the mitochondrial matrix. The protein is Cytochrome c oxidase subunit 3 (MT-CO3) of Damaliscus lunatus (Tsessebe).